The chain runs to 254 residues: 3-oxo-5-alpha-steroid 4-dehydrogenase 2 (254 aa).

4 helical membrane-spanning segments follow: residues 8-28 (VPVLAGSATLATMGTLILCLG), 72-92 (PRSLFGPPGNVLLALFSAHYF), 146-166 (FSFGVFLFILGMGINIHSDYT), and 206-226 (LATWSVPAFAFAFFTLCFLGM).

This sequence belongs to the steroid 5-alpha reductase family. In terms of tissue distribution, expressed in high levels in the prostate and many other androgen-sensitive tissues.

The protein localises to the microsome membrane. Its subcellular location is the endoplasmic reticulum membrane. It catalyses the reaction a 3-oxo-5alpha-steroid + NADP(+) = a 3-oxo-Delta(4)-steroid + NADPH + H(+). The enzyme catalyses 17beta-hydroxy-5alpha-androstan-3-one + NADP(+) = testosterone + NADPH + H(+). It carries out the reaction 5alpha-pregnane-3,20-dione + NADP(+) = progesterone + NADPH + H(+). In terms of biological role, converts testosterone (T) into 5-alpha-dihydrotestosterone (DHT) and progesterone or corticosterone into their corresponding 5-alpha-3-oxosteroids. It plays a central role in sexual differentiation and androgen physiology. The sequence is that of 3-oxo-5-alpha-steroid 4-dehydrogenase 2 (Srd5a2) from Rattus norvegicus (Rat).